The primary structure comprises 265 residues: MKAVVLTLAVLFLTGSQARHFWQQDEPQSSWDRVRDLANVYVDAVKESGREYVSQLEASALGKQLNLKLVDNWDTLGSTFQKVHEHLGPVAQEFWEKLEKETEELRREINKDLEDVRQKTQPFLDEIQKKWQEDLERYRQKVEPLSAQLREGARQKLMELQEQVTPLGEDLRDSVRAYADTLRTQLAPYSEQMRKTLGARLEAIKEGGSASLAEYHAKASEQLSALGEKAKPVLEDIHQGLMPMWESFKTGVLNVIDEAAKKLTA.

An N-terminal signal peptide occupies residues 1 to 18; sequence MKAVVLTLAVLFLTGSQA. A run of 2 repeats spans residues 67–88 and 89–110. The 10 X approximate tandem repeats stretch occupies residues 67–265; sequence LKLVDNWDTL…IDEAAKKLTA (199 aa). The stretch at 111 to 121 is one 3; half-length repeat; that stretch reads KDLEDVRQKTQ. 5 consecutive repeat copies span residues 122-143, 144-165, 166-187, 188-209, and 210-231. A Methionine sulfoxide modification is found at Met-193. The stretch at 232-242 is one 9; half-length repeat; that stretch reads PVLEDIHQGLM. 2 positions are modified to methionine sulfoxide: Met-242 and Met-244. Residues 243–265 form repeat 10; sequence PMWESFKTGVLNVIDEAAKKLTA.

Belongs to the apolipoprotein A1/A4/E family. Homodimer. Interacts with APOA1BP and CLU. Component of a sperm activating protein complex (SPAP), consisting of APOA1, an immunoglobulin heavy chain, an immunoglobulin light chain and albumin. Interacts with NDRG1. Interacts with SCGB3A2. Interacts with NAXE and YJEFN3. Glycosylated. In terms of processing, palmitoylated. Post-translationally, phosphorylation sites are present in the extracellular medium. In terms of tissue distribution, major protein of plasma HDL, also found in chylomicrons.

Its subcellular location is the secreted. Functionally, participates in the reverse transport of cholesterol from tissues to the liver for excretion by promoting cholesterol efflux from tissues and by acting as a cofactor for the lecithin cholesterol acyltransferase (LCAT). As part of the SPAP complex, activates spermatozoa motility. This Tupaia belangeri (Common tree shrew) protein is Apolipoprotein A-I (APOA1).